We begin with the raw amino-acid sequence, 1146 residues long: MKTAFFQPDIPTQPNDHKILGNVLPGADALAISEISEQNQNLTVVVTPDTRSAVRLSRVLSELSSQDVCLFPDWETLPYDTFSPHQEIISSRLSALFHLQNAKKGIFLLPISTLMQRLCPPQYLQHNVLLIKKGDRLVIDKMRLQLEAAGYRAVEQVLEHGEYAVRGALLDLFPMGSAVPFRLDFFDDEIDSIRTFDVDTQRTLDEISSINLLPAHEFPTDDKGIEFFRAQFRETFGEIRRDPEHIYQQISKGTLISGIEYWQPLFFAEMATLFDYLPEQTLFVDMENNQTQGERFYQDAKQRYEQRKVDPMRPLLSPEKLWLNVDEVNRRLKSYPRITFKAEKVRSSVRQKNLPVAALPEVTIQSQQKEPLGQLRQFIEHFKGNVLFSVETEGRRETLLDLLSPLKLKPKQIQSLEQIENEKFSLLVSSLEQGFIIEQSLPVAIIGEANLLGKRIQQRSRDKRKTINPDTLVRNLAELKIGQPVVHLDHGVGRYGGLVTLDTGGIKAEYLLLNYANESKLYVPVTSLHLISRYVGGSDESAPLHKLGNEAWAKSRQKAAEKIRDVAAELLDVYAQREAKKGFAFKYDREEFQQFSATFPFEETYDQEMAINAVISDMCQPKAMDRLVCGDVGFGKTEVAMRAAFLAVMNHKQVAVLVPTTLLAQQHYENFKDRFANLPVNVEVLSRFKTAKEQKQILENLAEGKVDILIGTHKLIQSDVKFNDLGLLIIDEEHRFGVGQKEKIKQLRANIDILTLTATPIPRTLNMAMNGIRDLSIISTPPARRLSIKTFVRQNDDLVVREAILREILRGGQVYYLHNDVASIENTAEKLTALVPEARVIVGHGQMRERELERVMSDFYHQRYNVLVCSTIIETGIDVPTANTIIIERADHFGLAQLHQLRGRVGRSHHQAYAYLLTPPPKMMTKDAERRLDALENLDNLGAGFILATHDLEIRGAGELLGNEQSGQIESIGFSLYMELLDAAVKALKEGREPSLEELTQQQADIELRVPALLPDDYLGDVNMRLSFYKRIAAAESKAELDELKVELIDRFGLLPDATKNLLQITELRLLVEPLNVVRIDAGTQGGFIEFSAKAQVNPDKFIQLIQKEPIVYRFDGPFKFKFMKDLSDNKVRLEFVVDLLRTIAA.

Residues 617–778 (DMCQPKAMDR…MNGIRDLSII (162 aa)) enclose the Helicase ATP-binding domain. 630-637 (GDVGFGKT) provides a ligand contact to ATP. The short motif at 731–734 (DEEH) is the DEEH box element. In terms of domain architecture, Helicase C-terminal spans 800–953 (VREAILREIL…GFILATHDLE (154 aa)).

The protein in the N-terminal section; belongs to the UvrB family. It in the C-terminal section; belongs to the helicase family. RecG subfamily.

It is found in the cytoplasm. Functionally, couples transcription and DNA repair by recognizing RNA polymerase (RNAP) stalled at DNA lesions. Mediates ATP-dependent release of RNAP and its truncated transcript from the DNA, and recruitment of nucleotide excision repair machinery to the damaged site. The polypeptide is Transcription-repair-coupling factor (Haemophilus influenzae (strain ATCC 51907 / DSM 11121 / KW20 / Rd)).